Here is a 154-residue protein sequence, read N- to C-terminus: Putative pre-16S rRNA nuclease (154 aa).

The protein belongs to the YqgF nuclease family.

Its subcellular location is the cytoplasm. In terms of biological role, could be a nuclease involved in processing of the 5'-end of pre-16S rRNA. The protein is Putative pre-16S rRNA nuclease of Rickettsia canadensis (strain McKiel).